Here is a 505-residue protein sequence, read N- to C-terminus: 2,3-bisphosphoglycerate-independent phosphoglycerate mutase (505 aa).

Mn(2+) is bound by residues aspartate 12 and serine 62. Catalysis depends on serine 62, which acts as the Phosphoserine intermediate. Substrate contacts are provided by residues histidine 123, 153–154 (RD), arginine 185, arginine 191, 257–260 (RPDR), and lysine 330. Positions 397, 401, 438, 439, and 456 each coordinate Mn(2+).

Belongs to the BPG-independent phosphoglycerate mutase family. Monomer. It depends on Mn(2+) as a cofactor.

The enzyme catalyses (2R)-2-phosphoglycerate = (2R)-3-phosphoglycerate. Its pathway is carbohydrate degradation; glycolysis; pyruvate from D-glyceraldehyde 3-phosphate: step 3/5. In terms of biological role, catalyzes the interconversion of 2-phosphoglycerate and 3-phosphoglycerate. The protein is 2,3-bisphosphoglycerate-independent phosphoglycerate mutase of Staphylococcus epidermidis (strain ATCC 35984 / DSM 28319 / BCRC 17069 / CCUG 31568 / BM 3577 / RP62A).